Reading from the N-terminus, the 239-residue chain is Bradykinin-potentiating and C-type natriuretic peptides (239 aa).

Residues 1–23 (MFVSRLAASGLLLLALLAVSLDG) form the signal peptide. 2 propeptides span residues 24 to 33 (KPVQQWSHKG) and 43 to 49 (LVVQQWS). Pyrrolidone carboxylic acid is present on Gln50. Positions 62–64 (VVV) are excised as a propeptide. At Gln65 the chain carries Pyrrolidone carboxylic acid. The propeptide occupies 76-82 (LVVQQWS). Gln83 is subject to Pyrrolidone carboxylic acid. A propeptide spanning residues 95–97 (LVV) is cleaved from the precursor. A Pyrrolidone carboxylic acid modification is found at Gln98. 2 consecutive propeptides follow at residues 109–136 (LLKP…AALD) and 148–217 (GSKA…LAKK). The segment at 132-205 (EAALDTPPAG…HHAVGGGGGG (74 aa)) is disordered. The segment covering 161–171 (SKGASATSAAS) has biased composition (low complexity). Positions 173-183 (PMRDLRTDGKQ) are enriched in basic and acidic residues. A disulfide bond links Cys223 and Cys239.

The protein in the N-terminal section; belongs to the bradykinin-potentiating peptide family. It in the central section; belongs to the bradykinin inhibitor peptide family. In the C-terminal section; belongs to the natriuretic peptide family. As to expression, expressed by the venom gland.

Its subcellular location is the secreted. Functionally, bradykinin-potentiating peptides both inhibit the activity of the angiotensin-converting enzyme (ACE) and enhances the action of bradykinin by inhibiting the peptidases that inactivate it. They act as indirect hypotensive agent. Inhibits angiotensin-converting enzyme (ACE) activity (IC(50)=4.25 uM), preventing the release of angiotensin and thus indirectly contributing to hypotension. In vivo, induce hypotensive response in both normotensive and hypertensive rats. In terms of biological role, antagonizes the vasodilatory actions of bradykinin at the B2 bradykinin receptor (BDKRB2). Its function is as follows. has a vasorelaxant activity in rat aortic strips and a diuretic potency in anesthetized rats. May act by activating natriuretic receptors (NPR1 and/or NPR2). The sequence is that of Bradykinin-potentiating and C-type natriuretic peptides from Lachesis muta muta (Bushmaster).